The chain runs to 332 residues: Glycerol-3-phosphate dehydrogenase [NAD(P)+] (332 aa).

The NADPH site is built by W11, R30, and K108. Residues K108, G137, and S139 each coordinate sn-glycerol 3-phosphate. NADPH is bound at residue A141. 5 residues coordinate sn-glycerol 3-phosphate: K192, D245, S255, R256, and N257. Catalysis depends on K192, which acts as the Proton acceptor. R256 is a binding site for NADPH. 2 residues coordinate NADPH: V280 and E282.

This sequence belongs to the NAD-dependent glycerol-3-phosphate dehydrogenase family.

It localises to the cytoplasm. It carries out the reaction sn-glycerol 3-phosphate + NAD(+) = dihydroxyacetone phosphate + NADH + H(+). The catalysed reaction is sn-glycerol 3-phosphate + NADP(+) = dihydroxyacetone phosphate + NADPH + H(+). Its pathway is membrane lipid metabolism; glycerophospholipid metabolism. Functionally, catalyzes the reduction of the glycolytic intermediate dihydroxyacetone phosphate (DHAP) to sn-glycerol 3-phosphate (G3P), the key precursor for phospholipid synthesis. This chain is Glycerol-3-phosphate dehydrogenase [NAD(P)+], found in Burkholderia orbicola (strain AU 1054).